Here is a 201-residue protein sequence, read N- to C-terminus: Phospholipase A2 inhibitor NAI (201 aa).

The N-terminal stretch at 1-19 (MKSLQIICLLFVLVARGSC) is a signal peptide. 8 cysteine pairs are disulfide-bonded: Cys22/Cys47, Cys25/Cys32, Cys40/Cys68, Cys74/Cys95, Cys96/Cys101, Cys119/Cys144, Cys137/Cys166, and Cys170/Cys191. N-linked (GlcNAc...) asparagine glycosylation occurs at Asn176.

This sequence belongs to the CNF-like-inhibitor family. As to quaternary structure, heterotrimer of 2 subunits A and 1 subunit B; non-covalently linked. In terms of processing, N-glycosylated, probably by biantennary structure. Glycosylation does not change PLA2 inhibitory activity. Expressed by the liver.

Its subcellular location is the secreted. In terms of biological role, inhibits the enzymatic activity of all phospholipase A2 tested, binding them with micromole to nanomole affinity. This chain is Phospholipase A2 inhibitor NAI, found in Notechis ater (Black tiger snake).